Reading from the N-terminus, the 282-residue chain is RNA-4 uncharacterized 31.9 kDa protein (282 aa).

This Beta macrocarpa (Beet) protein is RNA-4 uncharacterized 31.9 kDa protein.